We begin with the raw amino-acid sequence, 349 residues long: Phosphoribosylformylglycinamidine cyclo-ligase (349 aa).

This sequence belongs to the AIR synthase family.

It localises to the cytoplasm. It carries out the reaction 2-formamido-N(1)-(5-O-phospho-beta-D-ribosyl)acetamidine + ATP = 5-amino-1-(5-phospho-beta-D-ribosyl)imidazole + ADP + phosphate + H(+). It functions in the pathway purine metabolism; IMP biosynthesis via de novo pathway; 5-amino-1-(5-phospho-D-ribosyl)imidazole from N(2)-formyl-N(1)-(5-phospho-D-ribosyl)glycinamide: step 2/2. The protein is Phosphoribosylformylglycinamidine cyclo-ligase of Methanococcus vannielii (strain ATCC 35089 / DSM 1224 / JCM 13029 / OCM 148 / SB).